A 3149-amino-acid polypeptide reads, in one-letter code: Large tegument protein deneddylase (3149 aa).

The span at 1–13 (MSNGDWGQSQRTR) shows a compositional bias: polar residues. The tract at residues 1 to 30 (MSNGDWGQSQRTRGTGPVRGIRTMDVNAPG) is disordered. The interval 1-268 (MSNGDWGQSQ…YEANGSGFDL (268 aa)) is deubiquitination activity. Positions 41-258 (LGTASCNQAH…MLEHYGVYDF (218 aa)) constitute a Peptidase C76 domain. Active-site residues include Cys-61, Asp-193, and His-195. The interval 319–341 (PAARYSPAKTNSPPSSPASAAPA) is disordered. 8 tandem repeats follow at residues 335–339 (PASAA), 340–344 (PASAA), 345–349 (PASAA), 350–354 (PASAA), 355–359 (PASAA), 360–364 (PASAA), 365–369 (PASAA), and 370–374 (PASAA). The 8 X 5 AA repeats of P-A-S-A-A stretch occupies residues 335-374 (PASAAPASAAPASAAPASAAPASAAPASAAPASAAPASAA). Disordered regions lie at residues 382 to 656 (FIPI…GSGL), 901 to 923 (LLSGGDQEAGEGGGEPEDNSIYR), 1143 to 1166 (APISPASPSATPANHDNPEATPPL), 1412 to 1434 (GRKEKEKLREQEDKERQERRARE), 1644 to 1677 (PEATNDPGQANLPPPPTIPQATAPPRLASDSALW), 2583 to 2839 (GLVS…PTAV), 2852 to 2981 (AAAS…PGAR), and 2995 to 3019 (QTYTVRKEAPPSAASQLPKMPKCKD). Pro residues predominate over residues 462 to 483 (LPPPVIPIPHQSPPASPTPHPA). 2 stretches are compositionally biased toward low complexity: residues 509-536 (AAPSNPKIPLTTPSPSPTAAAAPTTTTL) and 544-564 (QPPQSAAPAPSPLLPQQQPTP). Residues 554-584 (SPLLPQQQPTPSAAPAPSPLLPQQQPPPSAA) are interaction with inner tegument protein. A compositionally biased stretch (pro residues) spans 565 to 609 (SAAPAPSPLLPQQQPPPSAARAPSPLPPQQQPLPSATPAPPPAQQ). The segment covering 1143 to 1155 (APISPASPSATPA) has biased composition (low complexity). Polar residues predominate over residues 2592-2603 (SADNTPASSDRL). Positions 2711–2720 (QPAPQQPPSS) are enriched in pro residues. Polar residues-rich tracts occupy residues 2734-2745 (SPHSTPSTASGS) and 2784-2804 (SAASLTTFGLQPQDTQASSQD). The segment covering 2812-2827 (MQREKKQQGGREEAAE) has biased composition (basic and acidic residues). The segment covering 2874–2885 (APALGSGLAAPA) has biased composition (low complexity).

It belongs to the herpesviridae large tegument protein family. As to quaternary structure, interacts with host CUL1 and CUL4A; these interactions inhibit the E3 ligase activity of cullins. Interacts with inner tegument protein. Interacts with capsid vertex specific component CVC2. Interacts with the major capsid protein/MCP. Interacts with host TRIM25 and YWHAZ.

It is found in the virion tegument. The protein localises to the host cytoplasm. It localises to the host nucleus. It carries out the reaction Thiol-dependent hydrolysis of ester, thioester, amide, peptide and isopeptide bonds formed by the C-terminal Gly of ubiquitin (a 76-residue protein attached to proteins as an intracellular targeting signal).. In terms of biological role, large tegument protein that plays multiple roles in the viral cycle. During viral entry, remains associated with the capsid while most of the tegument is detached and participates in the capsid transport toward the host nucleus. Plays a role in the routing of the capsid at the nuclear pore complex and subsequent uncoating. Within the host nucleus, acts as a deneddylase and promotes the degradation of nuclear CRLs (cullin-RING ubiquitin ligases) and thereby stabilizes nuclear CRL substrates, while cytoplasmic CRLs remain unaffected. These modifications prevent host cell cycle S-phase progression and create a favorable environment allowing efficient viral genome replication. Participates later in the secondary envelopment of capsids. Indeed, plays a linker role for the association of the outer viral tegument to the capsids together with the inner tegument protein. Counteracts host TLR-mediated NF-kappa-B activation through both MYD88 and TICAM1-dependent pathways by interfering with 'Lys-63'- and 'Lys-48'-linked ubiquitination of signaling intermediates such as TRAF6 and IKBKG. Inhibits type I interferon production by forming a tri-molecular complex with host TRIM25 and 14-3-3 thereby promoting TRIM25 autoubiquitination and sequestration of the ligase into inactive protein aggregates. In turn, host RIGI is recruited to the complex but ubiquitination is severely impaired leading to inhibition of the pathway. Also catalyzes the removal of 'Lys-48'- and 'Lys-63'-linked ubiquitin chains on host TBK1 and STING1 suppressing cGAS-STING signaling in addition to the RIGI-MAVS pathway. Inhibits selective autophagy by deubiquitinating host SQSTM1. In turn, decreased SQSTM1 ubiquitination fails to recruit LC3 to SQSTM1-positive aggregates. In the host nucleus, deubiquitinates topoisomerase II subunits TOP2A and TOP2B thereby stabilizing SUMOylated TOP2 which halts the DNA damage response to TOP2-induced double strand DNA breaks and promotes cell survival. The chain is Large tegument protein deneddylase from Epstein-Barr virus (strain B95-8) (HHV-4).